Here is a 1032-residue protein sequence, read N- to C-terminus: Integrin alpha-4 (1032 aa).

The N-terminal stretch at 1-34 (MIRDLGKVGKVSLLLDHIWTGILLYTVILTPADC) is a signal peptide. Residues 35-974 (YNIDESSPML…LHNLKPKKHV (940 aa)) are Extracellular-facing. FG-GAP repeat units lie at residues 36 to 100 (NIDE…PNRT), 113 to 177 (KCGK…TELS), 186 to 237 (DHVR…TIKS), 238 to 291 (YVDL…EKQL), 292 to 351 (TILF…GAME), 353 to 411 (LKFE…GITP), and 415 to 477 (QRLQ…LPST). Residues Asn81 and Asn98 are each glycosylated (N-linked (GlcNAc...) asparagine). Intrachain disulfides connect Cys91/Cys101, Cys144/Cys165, and Cys183/Cys198. Asn229 is a glycosylation site (N-linked (GlcNAc...) asparagine). Residues Asp314, Asn316, Asp318, Leu320, Asp322, Asp376, Asp378, Asp380, Asp384, Asp438, Asp440, Asn442, Tyr444, and Asp446 each contribute to the Ca(2+) site. Asn479 is a glycosylation site (N-linked (GlcNAc...) asparagine). Residues Cys485 and Cys494 are joined by a disulfide bond. Residues Asn496, Asn517, Asn537, Asn626, and Asn660 are each glycosylated (N-linked (GlcNAc...) asparagine). Cystine bridges form between Cys500-Cys556 and Cys622-Cys627. A disulfide bond links Cys698 and Cys712. Residues Asn746 and Asn857 are each glycosylated (N-linked (GlcNAc...) asparagine). 2 cysteine pairs are disulfide-bonded: Cys853–Cys889 and Cys896–Cys901. A helical membrane pass occupies residues 975-998 (IYMIIGISLLLGILLFSLLTYILW). Over 999–1032 (KVGFFRRKYQPIGTEETSRRESWNYLNKDEKEVK) the chain is Cytoplasmic. The GFFKR motif motif lies at 1001-1005 (GFFRR).

The protein belongs to the integrin alpha chain family. In terms of assembly, heterodimer of an alpha and a beta subunit.

It is found in the membrane. Fibronectin and V-CAM adhesion receptor. This chain is Integrin alpha-4 (itga4), found in Xenopus laevis (African clawed frog).